Reading from the N-terminus, the 158-residue chain is MKIFIQNQQDKVDIDQHISKIIEESIVNTIKVFLEEENFEISVLIVDNSFIKELNRNYRNVNKETDVLSFPIFEFKNGKLLEDIVIMEDEIPLGDIVISIEKAAQQAKEFGHSLEREIAYLTVHSVLHLLGFDHIEEDDRKVMREYEEQILQSMGLTR.

Residues H124, H128, and H134 each coordinate Zn(2+).

Belongs to the endoribonuclease YbeY family. Requires Zn(2+) as cofactor.

The protein resides in the cytoplasm. Single strand-specific metallo-endoribonuclease involved in late-stage 70S ribosome quality control and in maturation of the 3' terminus of the 16S rRNA. This is Endoribonuclease YbeY from Caldicellulosiruptor bescii (strain ATCC BAA-1888 / DSM 6725 / KCTC 15123 / Z-1320) (Anaerocellum thermophilum).